The following is a 291-amino-acid chain: 4-diphosphocytidyl-2-C-methyl-D-erythritol kinase (291 aa).

Lysine 11 is an active-site residue. Residue 97–107 participates in ATP binding; the sequence is PVAAGIGGGSS. Aspartate 139 is an active-site residue.

It belongs to the GHMP kinase family. IspE subfamily.

The catalysed reaction is 4-CDP-2-C-methyl-D-erythritol + ATP = 4-CDP-2-C-methyl-D-erythritol 2-phosphate + ADP + H(+). The protein operates within isoprenoid biosynthesis; isopentenyl diphosphate biosynthesis via DXP pathway; isopentenyl diphosphate from 1-deoxy-D-xylulose 5-phosphate: step 3/6. Functionally, catalyzes the phosphorylation of the position 2 hydroxy group of 4-diphosphocytidyl-2C-methyl-D-erythritol. The sequence is that of 4-diphosphocytidyl-2-C-methyl-D-erythritol kinase from Methylorubrum extorquens (strain PA1) (Methylobacterium extorquens).